A 377-amino-acid polypeptide reads, in one-letter code: MSWQQAAGYGAGDAMARRAPSVVVAGGGTAGHIEPALALADAVRRLRPDARVTALGTERGLENRLVPARGYPLELVPPVPMPRKPTPELLKLPLKVRESVKRTREVLDRVGADVVVGFGGYVSLPAYLAARGKTPIVVHEANARAGLANKVGAKFAERVLSATPDSGLAGARTIGIPLRESITTLDRAALRAQARAHFGLHPHAPTILVFGGSQGARTLNTAFSGAADALGRAGVGVLHAHGPKNTLAVQQVPGAPVYNAVPYLERMDLAYAAADLVVCRSGAMTVAEVSAVGLPAVFVPLPHGNGEQALNAQPVVSAGGARLVPDEQMTPQRVVEELLPLALDAQRLQEMSRATLSTGHREADRVLAQIVLEVAGR.

UDP-N-acetyl-alpha-D-glucosamine contacts are provided by residues 29–31 (TAG), N142, R179, S213, and Q308.

Belongs to the glycosyltransferase 28 family. MurG subfamily.

Its subcellular location is the cell membrane. The catalysed reaction is di-trans,octa-cis-undecaprenyl diphospho-N-acetyl-alpha-D-muramoyl-L-alanyl-D-glutamyl-meso-2,6-diaminopimeloyl-D-alanyl-D-alanine + UDP-N-acetyl-alpha-D-glucosamine = di-trans,octa-cis-undecaprenyl diphospho-[N-acetyl-alpha-D-glucosaminyl-(1-&gt;4)]-N-acetyl-alpha-D-muramoyl-L-alanyl-D-glutamyl-meso-2,6-diaminopimeloyl-D-alanyl-D-alanine + UDP + H(+). It participates in cell wall biogenesis; peptidoglycan biosynthesis. Its function is as follows. Cell wall formation. Catalyzes the transfer of a GlcNAc subunit on undecaprenyl-pyrophosphoryl-MurNAc-pentapeptide (lipid intermediate I) to form undecaprenyl-pyrophosphoryl-MurNAc-(pentapeptide)GlcNAc (lipid intermediate II). This is UDP-N-acetylglucosamine--N-acetylmuramyl-(pentapeptide) pyrophosphoryl-undecaprenol N-acetylglucosamine transferase from Saccharopolyspora erythraea (strain ATCC 11635 / DSM 40517 / JCM 4748 / NBRC 13426 / NCIMB 8594 / NRRL 2338).